The sequence spans 369 residues: Anhydro-N-acetylmuramic acid kinase (369 aa).

12-19 lines the ATP pocket; that stretch reads GTSMDGVD.

It belongs to the anhydro-N-acetylmuramic acid kinase family.

It catalyses the reaction 1,6-anhydro-N-acetyl-beta-muramate + ATP + H2O = N-acetyl-D-muramate 6-phosphate + ADP + H(+). It participates in amino-sugar metabolism; 1,6-anhydro-N-acetylmuramate degradation. It functions in the pathway cell wall biogenesis; peptidoglycan recycling. Catalyzes the specific phosphorylation of 1,6-anhydro-N-acetylmuramic acid (anhMurNAc) with the simultaneous cleavage of the 1,6-anhydro ring, generating MurNAc-6-P. Is required for the utilization of anhMurNAc either imported from the medium or derived from its own cell wall murein, and thus plays a role in cell wall recycling. This chain is Anhydro-N-acetylmuramic acid kinase, found in Shewanella baltica (strain OS155 / ATCC BAA-1091).